A 430-amino-acid chain; its full sequence is MGKNVVVLGTQWGDEGKGKIVDLLTEHAAAVVRYQGGHNAGHTLVINGEKTVLHLIPSGILREGVQCLIGNGVVVAPDALMREITKLEEKGVPVRERLRISPAAPLILSYHVALDQAREKARGEAKIGTTGRGIGPAYEDKVARRGLRVGDLFHRERFAAKLGELLDYHNFQLVNYYKEPAIDFQQTLDECMAYAEQLKPMMLDVTAELHNLRRAGKDIMFEGAQGSLLDIDHGTYPYVTSSNTTAGGISTGSGVGPMYLDYILGITKAYTTRVGSGPFPTELFDETGATLAKRGHEFGSTTGRARRCGWFDAVILRRAIDVNSISGICLTKLDVLDGLETINICVGYKNENGAVIDAPSDADSYIGLEPVYEEMPGWSESTLGVKTLEELPQAARDYIKRIEELVGAPIDIISTGPDRNETIVLRHPFA.

GTP contacts are provided by residues 13–19 (GDEGKGK) and 41–43 (GHT). Asp-14 (proton acceptor) is an active-site residue. The Mg(2+) site is built by Asp-14 and Gly-41. Residues 14 to 17 (DEGK), 39 to 42 (NAGH), Thr-130, Arg-144, Gln-225, Thr-240, and Arg-304 contribute to the IMP site. The Proton donor role is filled by His-42. 300 to 306 (STTGRAR) is a binding site for substrate. Residues Arg-306, 332-334 (KLD), and 414-416 (STG) each bind GTP.

The protein belongs to the adenylosuccinate synthetase family. Homodimer. The cofactor is Mg(2+).

The protein resides in the cytoplasm. It carries out the reaction IMP + L-aspartate + GTP = N(6)-(1,2-dicarboxyethyl)-AMP + GDP + phosphate + 2 H(+). It functions in the pathway purine metabolism; AMP biosynthesis via de novo pathway; AMP from IMP: step 1/2. Functionally, plays an important role in the de novo pathway of purine nucleotide biosynthesis. Catalyzes the first committed step in the biosynthesis of AMP from IMP. This chain is Adenylosuccinate synthetase, found in Pseudomonas putida (strain ATCC 700007 / DSM 6899 / JCM 31910 / BCRC 17059 / LMG 24140 / F1).